We begin with the raw amino-acid sequence, 456 residues long: Phosphomethylpyrimidine synthase (456 aa).

Substrate contacts are provided by residues Asn-80, Met-109, Tyr-139, His-175, 195 to 197 (SRG), 236 to 239 (DSLR), and Glu-275. A Zn(2+)-binding site is contributed by His-279. A substrate-binding site is contributed by Tyr-302. His-343 lines the Zn(2+) pocket. Cys-423, Cys-426, and Cys-431 together coordinate [4Fe-4S] cluster.

It belongs to the ThiC family. It depends on [4Fe-4S] cluster as a cofactor.

It catalyses the reaction 5-amino-1-(5-phospho-beta-D-ribosyl)imidazole + S-adenosyl-L-methionine = 4-amino-2-methyl-5-(phosphooxymethyl)pyrimidine + CO + 5'-deoxyadenosine + formate + L-methionine + 3 H(+). It participates in cofactor biosynthesis; thiamine diphosphate biosynthesis. Its function is as follows. Catalyzes the synthesis of the hydroxymethylpyrimidine phosphate (HMP-P) moiety of thiamine from aminoimidazole ribotide (AIR) in a radical S-adenosyl-L-methionine (SAM)-dependent reaction. The chain is Phosphomethylpyrimidine synthase from Prochlorococcus marinus (strain MIT 9312).